The chain runs to 158 residues: MQGTLSVWLAKRGLVHRSLGFDYQGIETLQIKPEDWHSIAVILYVYGYNYLRSQCAYDVAPGGLLASVYHLTRIEYGVNQAEEVCIKVFTHRSNPRIPSVFWVWKSTDFQERESYDMLGITYDSHPRLKRILMPESWIGWPLRKDYIAPNFYEIQDAY.

It belongs to the complex I 30 kDa subunit family. In terms of assembly, NDH is composed of at least 16 different subunits, 5 of which are encoded in the nucleus.

The protein resides in the plastid. The protein localises to the chloroplast thylakoid membrane. The catalysed reaction is a plastoquinone + NADH + (n+1) H(+)(in) = a plastoquinol + NAD(+) + n H(+)(out). It catalyses the reaction a plastoquinone + NADPH + (n+1) H(+)(in) = a plastoquinol + NADP(+) + n H(+)(out). In terms of biological role, NDH shuttles electrons from NAD(P)H:plastoquinone, via FMN and iron-sulfur (Fe-S) centers, to quinones in the photosynthetic chain and possibly in a chloroplast respiratory chain. The immediate electron acceptor for the enzyme in this species is believed to be plastoquinone. Couples the redox reaction to proton translocation, and thus conserves the redox energy in a proton gradient. This is NAD(P)H-quinone oxidoreductase subunit J, chloroplastic from Crucihimalaya wallichii (Rock-cress).